A 93-amino-acid polypeptide reads, in one-letter code: Integration host factor subunit beta (93 aa).

The protein belongs to the bacterial histone-like protein family. In terms of assembly, heterodimer of an alpha and a beta chain.

Its function is as follows. This protein is one of the two subunits of integration host factor, a specific DNA-binding protein that functions in genetic recombination as well as in transcriptional and translational control. The protein is Integration host factor subunit beta of Aliivibrio salmonicida (strain LFI1238) (Vibrio salmonicida (strain LFI1238)).